The following is a 141-amino-acid chain: Large ribosomal subunit protein uL11 (141 aa).

It belongs to the universal ribosomal protein uL11 family. As to quaternary structure, part of the ribosomal stalk of the 50S ribosomal subunit. Interacts with L10 and the large rRNA to form the base of the stalk. L10 forms an elongated spine to which L12 dimers bind in a sequential fashion forming a multimeric L10(L12)X complex. Post-translationally, one or more lysine residues are methylated.

In terms of biological role, forms part of the ribosomal stalk which helps the ribosome interact with GTP-bound translation factors. This Chloroflexus aurantiacus (strain ATCC 29366 / DSM 635 / J-10-fl) protein is Large ribosomal subunit protein uL11.